The chain runs to 391 residues: Secreted aspartic protease 1 (391 aa).

An N-terminal signal peptide occupies residues 1–18 (MFLKNIFIALAIALLVDA). The propeptide at 19–50 (SPAKRSPGFVTLDFDVIKTPVNATGQEGKVKR) is activation peptide. A glycan (N-linked (GlcNAc...) asparagine) is linked at N40. The Peptidase A1 domain maps to 64–377 (YAADITIGSN…DLDDDKISLA (314 aa)). D82 is an active-site residue. Pepstatin A is bound at residue 82–84 (DTG). Residues C97 and C109 are joined by a disulfide bond. 135–136 (GD) lines the pepstatin A pocket. Residues D241 and D263 each contribute to the Zn(2+) site. Residue D267 is part of the active site. Position 267–271 (267–271 (DSGTT)) interacts with pepstatin A. A disulfide bond links C305 and C343.

Belongs to the peptidase A1 family. In terms of assembly, monomer.

It is found in the secreted. It catalyses the reaction Preferential cleavage at the carboxyl of hydrophobic amino acids, but fails to cleave 15-Leu-|-Tyr-16, 16-Tyr-|-Leu-17 and 24-Phe-|-Phe-25 of insulin B chain. Activates trypsinogen, and degrades keratin.. Inhibited by pepstatin A analogs and squash aspartic peptidase inhibitor (SQAPI). Functionally, secreted aspartic peptidases (SAPs) are a group of ten acidic hydrolases considered as key virulence factors. These enzymes supply the fungus with nutrient amino acids as well as are able to degrade the selected host's proteins involved in the immune defense. Induces host inflammatory cytokine production in a proteolytic activity-independent way. Plays a role in tissue damage during superficial infection. Moreover, acts toward human hemoglobin though limited proteolysis to generate a variety of antimicrobial hemocidins, enabling to compete with the other microorganisms of the same physiological niche using the microbicidal peptides generated from the host protein. Its function is as follows. Plays a key role in defense against host by cleaving histatin-5 (Hst 5), a peptide from human saliva that carries out fungicidal activity. The cleavage rate decreases in an order of SAP2 &gt; SAP9 &gt; SAP3 &gt; SAP7 &gt; SAP4 &gt; SAP1 &gt; SAP8. The first cleavage occurs between residues 'Lys-17' and 'His-18' of Hst 5, giving DSHAKRHHGYKRKFHEK and HHSHRGY peptides. Further fragmentation by SAP1 results in AKRHHGYKRKFHEK and AKRHHGY products. The protein is Secreted aspartic protease 1 of Candida albicans (strain SC5314 / ATCC MYA-2876) (Yeast).